Consider the following 120-residue polypeptide: Ribosome-binding factor A (120 aa).

Belongs to the RbfA family. Monomer. Binds 30S ribosomal subunits, but not 50S ribosomal subunits or 70S ribosomes.

Its subcellular location is the cytoplasm. One of several proteins that assist in the late maturation steps of the functional core of the 30S ribosomal subunit. Associates with free 30S ribosomal subunits (but not with 30S subunits that are part of 70S ribosomes or polysomes). Required for efficient processing of 16S rRNA. May interact with the 5'-terminal helix region of 16S rRNA. The sequence is that of Ribosome-binding factor A from Rickettsia peacockii (strain Rustic).